A 155-amino-acid polypeptide reads, in one-letter code: RxLR effector protein 24 (155 aa).

An N-terminal signal peptide occupies residues 1–21 (MRLLIWVLFVTLVTFVSNTTA). Residues 52 to 78 (RFLRTESKNDLKSDADTNGIDIEDEER) carry the RxLR-dEER motif. An RABA-binding domain region spans residues 105-155 (EKAFQRMNQKGETPTTLAKRLDIGKTAEKRFEKTYEKYTAWWINHHTNAGT).

Belongs to the RxLR effector family. In terms of assembly, interacts with Arabidopsis thaliana RABA GTPases including RABA1a, RABA1b, RABA1c, RABA1d, RABA1f, RABA2a, RABA2c, RABA2d, RABA4a, RABA4b and RABA4c.

Its subcellular location is the secreted. It is found in the host cell membrane. The protein localises to the host endomembrane system. Its function is as follows. Effector protein that contributes to pathogen virulence. Targets members of the RABA GTPases subfamily to inhibit vesicular secretion, leading to an accumulation of secretory proteins in the endoplasmic reticulum. The protein is RxLR effector protein 24 of Phytophthora brassicae.